Consider the following 280-residue polypeptide: Phosphatidylserine decarboxylase proenzyme (280 aa).

Residues aspartate 88, histidine 144, and serine 247 each act as charge relay system; for autoendoproteolytic cleavage activity in the active site. The Schiff-base intermediate with substrate; via pyruvic acid; for decarboxylase activity role is filled by serine 247. The residue at position 247 (serine 247) is a Pyruvic acid (Ser); by autocatalysis.

Belongs to the phosphatidylserine decarboxylase family. PSD-B subfamily. Prokaryotic type I sub-subfamily. Heterodimer of a large membrane-associated beta subunit and a small pyruvoyl-containing alpha subunit. It depends on pyruvate as a cofactor. Post-translationally, is synthesized initially as an inactive proenzyme. Formation of the active enzyme involves a self-maturation process in which the active site pyruvoyl group is generated from an internal serine residue via an autocatalytic post-translational modification. Two non-identical subunits are generated from the proenzyme in this reaction, and the pyruvate is formed at the N-terminus of the alpha chain, which is derived from the carboxyl end of the proenzyme. The autoendoproteolytic cleavage occurs by a canonical serine protease mechanism, in which the side chain hydroxyl group of the serine supplies its oxygen atom to form the C-terminus of the beta chain, while the remainder of the serine residue undergoes an oxidative deamination to produce ammonia and the pyruvoyl prosthetic group on the alpha chain. During this reaction, the Ser that is part of the protease active site of the proenzyme becomes the pyruvoyl prosthetic group, which constitutes an essential element of the active site of the mature decarboxylase.

It is found in the cell membrane. It catalyses the reaction a 1,2-diacyl-sn-glycero-3-phospho-L-serine + H(+) = a 1,2-diacyl-sn-glycero-3-phosphoethanolamine + CO2. It functions in the pathway phospholipid metabolism; phosphatidylethanolamine biosynthesis; phosphatidylethanolamine from CDP-diacylglycerol: step 2/2. Catalyzes the formation of phosphatidylethanolamine (PtdEtn) from phosphatidylserine (PtdSer). The chain is Phosphatidylserine decarboxylase proenzyme from Xanthomonas axonopodis pv. citri (strain 306).